Consider the following 557-residue polypeptide: Elongator complex protein 3 (557 aa).

Residues 91–381 (RTASGIAVVA…YRVQRDIPMP (291 aa)) enclose the Radical SAM core domain. 3 residues coordinate [4Fe-4S] cluster: Cys-108, Cys-118, and Cys-121. Residue Lys-173 coordinates acetyl-CoA. Residues 405 to 557 (TTCRDVRTRE…LDGPYMSKRI (153 aa)) form the N-acetyltransferase domain. Residue Lys-453 forms a Glycyl lysine isopeptide (Lys-Gly) (interchain with G-Cter in ubiquitin) linkage. Acetyl-CoA contacts are provided by residues 485-488 (ELHV), 508-510 (FGT), and Tyr-541.

This sequence belongs to the ELP3 family. Component of the elongator complex which consists of ELP1/IKI3, ELP2, ELP3, ELP4, ELP5/IKI1 and ELP6. The elongator complex is composed of two copies of the Elp123 subcomplex (composed of ELP1/IKI3, ELP2 and ELP3) and two copies of the Elp456 subcomplex (composed of ELP4, ELP5/IKI1 and ELP6). The Elp123 subcomplex forms a two-lobed scaffold, which binds the Elp456 subcomplex asymmetrically. In each lobe, ELP2 is tightly sandwiched between ELP1/IKI3 and ELP3. The Elp123 subcomplex binds tRNA through ELP1/IKI3 and ELP3 and can bind 2 tRNAs simultaneously. tRNA-binding induces conformational rearrangements which precisely position the targeted anticodon base in the active site. ELP3 interacts with KTI11/DPH3. ELP3 interacts with KTI12. The Elp456 subcomplex binds tRNA and has ATPase activity. [4Fe-4S] cluster serves as cofactor.

The protein resides in the cytoplasm. The protein localises to the nucleus. The enzyme catalyses uridine(34) in tRNA + acetyl-CoA + S-adenosyl-L-methionine + H2O = 5-(carboxymethyl)uridine(34) in tRNA + 5'-deoxyadenosine + L-methionine + CoA + 2 H(+). The protein operates within tRNA modification; 5-methoxycarbonylmethyl-2-thiouridine-tRNA biosynthesis. Functionally, catalytic tRNA acetyltransferase subunit of the elongator complex which is required for multiple tRNA modifications, including mcm5U (5-methoxycarbonylmethyl uridine), mcm5s2U (5-methoxycarbonylmethyl-2-thiouridine), and ncm5U (5-carbamoylmethyl uridine). In the elongator complex, acts as a tRNA uridine(34) acetyltransferase, which mediates formation of carboxymethyluridine in the wobble base at position 34 in tRNAs. The complex functions as a gamma-toxin target (TOT); disruption of the complex confers resistance to Kluyveromyces lactis toxin zymocin (pGKL1 killer toxin). May also be involved in sensitivity to Pichia inositovora toxin. Independently, ELP3 may be involved in polarized exocytosis. This Saccharomyces cerevisiae (strain ATCC 204508 / S288c) (Baker's yeast) protein is Elongator complex protein 3.